The chain runs to 403 residues: Chromatin structure-remodeling complex subunit rsc58 (403 aa).

Positions 376–389 are enriched in low complexity; the sequence is SLSMNGSLSPSSTN. The segment at 376-403 is disordered; that stretch reads SLSMNGSLSPSSTNVPLQSYRRTTKSRR. Position 384 is a phosphoserine (Ser384).

As to quaternary structure, component of the RSC complex composed of at least arp9, arp42, rsc1, rsc4, rsc7, rsc9, rsc58, sfh1, snf21, ssr1, ssr2, ssr3 and ssr4. The complex interacts with histone and histone variant components of centromeric chromatin.

Its subcellular location is the cytoplasm. The protein resides in the nucleus. In terms of biological role, component of the chromatin structure remodeling complex (RSC), which is involved in transcription regulation and nucleosome positioning. Controls particularly membrane and organelle development genes. This Schizosaccharomyces pombe (strain 972 / ATCC 24843) (Fission yeast) protein is Chromatin structure-remodeling complex subunit rsc58 (rsc58).